Here is a 339-residue protein sequence, read N- to C-terminus: Protein RecA (339 aa).

Position 74–81 (74–81 (GPESSGKT)) interacts with ATP.

This sequence belongs to the RecA family.

It localises to the cytoplasm. Functionally, can catalyze the hydrolysis of ATP in the presence of single-stranded DNA, the ATP-dependent uptake of single-stranded DNA by duplex DNA, and the ATP-dependent hybridization of homologous single-stranded DNAs. It interacts with LexA causing its activation and leading to its autocatalytic cleavage. In Phytoplasma mali (strain AT), this protein is Protein RecA.